The following is a 180-amino-acid chain: Stathmin-3 (180 aa).

Residues Cys-22 and Cys-24 are each lipidated (S-palmitoyl cysteine). The region spanning 38 to 180 is the SLD domain; it reads GDMEVKQLDK…NKEQREEMSG (143 aa). A phosphoserine mark is found at Ser-50, Ser-60, Ser-65, Ser-68, Ser-72, Ser-73, and Ser-81. The disordered stretch occupies residues 58-82; that stretch reads LKSPSDLSPESPMLSSPPKRKDTSL. Low complexity predominate over residues 60–74; sequence SPSDLSPESPMLSSP. Positions 76–179 form a coiled coil; it reads KRKDTSLEEL…RNKEQREEMS (104 aa).

It belongs to the stathmin family. As to quaternary structure, interacts with STAT3. Interacts with CLU (secreted form); this interaction may act as an important modulator during neuronal differentiation. Post-translationally, N-terminal palmitoylation promotes specific anchoring to the cytosolic leaflet of Golgi membranes and subsequent vesicular trafficking along dendrites and axons. Neuronal Stathmins are substrates for palmitoyltransferases ZDHHC3, ZDHHC7 and ZDHHC15.

The protein localises to the golgi apparatus. The protein resides in the cell projection. It is found in the growth cone. It localises to the axon. Its subcellular location is the cytoplasm. The protein localises to the cytosol. In terms of biological role, exhibits microtubule-destabilizing activity, which is antagonized by STAT3. In Bos taurus (Bovine), this protein is Stathmin-3 (STMN3).